The chain runs to 276 residues: Undecaprenyl-diphosphatase (276 aa).

Helical transmembrane passes span 48 to 68 (AANS…AIVF), 92 to 112 (LSIA…FLFE), 119 to 139 (LFSV…MLFA), 155 to 175 (ISYK…WPGF), 196 to 216 (ADFT…LSLV), 225 to 245 (DLMP…LFVV), and 255 to 275 (IKLV…LLIM).

This sequence belongs to the UppP family.

It localises to the cell membrane. It carries out the reaction di-trans,octa-cis-undecaprenyl diphosphate + H2O = di-trans,octa-cis-undecaprenyl phosphate + phosphate + H(+). Functionally, catalyzes the dephosphorylation of undecaprenyl diphosphate (UPP). Confers resistance to bacitracin. The chain is Undecaprenyl-diphosphatase from Bacillus subtilis (strain 168).